We begin with the raw amino-acid sequence, 96 residues long: DNA-directed RNA polymerase subunit Rpo11 (96 aa).

This sequence belongs to the archaeal Rpo11/eukaryotic RPB11/RPC19 RNA polymerase subunit family. As to quaternary structure, part of the RNA polymerase complex.

It localises to the cytoplasm. It carries out the reaction RNA(n) + a ribonucleoside 5'-triphosphate = RNA(n+1) + diphosphate. In terms of biological role, DNA-dependent RNA polymerase (RNAP) catalyzes the transcription of DNA into RNA using the four ribonucleoside triphosphates as substrates. This Haloquadratum walsbyi (strain DSM 16790 / HBSQ001) protein is DNA-directed RNA polymerase subunit Rpo11.